Consider the following 405-residue polypeptide: Argininosuccinate synthase (405 aa).

ATP-binding positions include 10 to 18 (AYSGGLDTS) and Ala37. Residues Tyr88 and Ser93 each coordinate L-citrulline. ATP is bound at residue Gly118. L-aspartate-binding residues include Thr120, Asn124, and Asp125. Position 124 (Asn124) interacts with L-citrulline. The L-citrulline site is built by Arg128, Ser179, Ser188, Glu264, and Tyr276.

The protein belongs to the argininosuccinate synthase family. Type 1 subfamily. In terms of assembly, homotetramer.

The protein resides in the cytoplasm. The enzyme catalyses L-citrulline + L-aspartate + ATP = 2-(N(omega)-L-arginino)succinate + AMP + diphosphate + H(+). It functions in the pathway amino-acid biosynthesis; L-arginine biosynthesis; L-arginine from L-ornithine and carbamoyl phosphate: step 2/3. The sequence is that of Argininosuccinate synthase from Pseudomonas entomophila (strain L48).